The following is a 694-amino-acid chain: Glycine--tRNA ligase beta subunit (694 aa).

Belongs to the class-II aminoacyl-tRNA synthetase family. As to quaternary structure, tetramer of two alpha and two beta subunits.

The protein resides in the cytoplasm. It carries out the reaction tRNA(Gly) + glycine + ATP = glycyl-tRNA(Gly) + AMP + diphosphate. The chain is Glycine--tRNA ligase beta subunit from Lactiplantibacillus plantarum (strain ATCC BAA-793 / NCIMB 8826 / WCFS1) (Lactobacillus plantarum).